Here is a 636-residue protein sequence, read N- to C-terminus: 1-deoxy-D-xylulose-5-phosphate synthase (636 aa).

Residues His-74 and 115 to 117 (GHA) contribute to the thiamine diphosphate site. Asp-146 lines the Mg(2+) pocket. Thiamine diphosphate contacts are provided by residues 147–148 (GA), Asn-175, Tyr-285, and Glu-368. Residue Asn-175 coordinates Mg(2+).

It belongs to the transketolase family. DXPS subfamily. Homodimer. The cofactor is Mg(2+). Thiamine diphosphate is required as a cofactor.

It catalyses the reaction D-glyceraldehyde 3-phosphate + pyruvate + H(+) = 1-deoxy-D-xylulose 5-phosphate + CO2. It functions in the pathway metabolic intermediate biosynthesis; 1-deoxy-D-xylulose 5-phosphate biosynthesis; 1-deoxy-D-xylulose 5-phosphate from D-glyceraldehyde 3-phosphate and pyruvate: step 1/1. In terms of biological role, catalyzes the acyloin condensation reaction between C atoms 2 and 3 of pyruvate and glyceraldehyde 3-phosphate to yield 1-deoxy-D-xylulose-5-phosphate (DXP). The sequence is that of 1-deoxy-D-xylulose-5-phosphate synthase from Anaeromyxobacter dehalogenans (strain 2CP-1 / ATCC BAA-258).